We begin with the raw amino-acid sequence, 44 residues long: Thrombin-like enzyme F202 (44 aa).

The Peptidase S1 domain occupies 1–44 (VVGGDECNINEHRFLVALYANSSLLCGGTLINQEWVLIAAHCDR). Cysteines 26 and 42 form a disulfide. Residue His41 is the Charge relay system of the active site.

Belongs to the peptidase S1 family. Snake venom subfamily. In terms of assembly, monomer. Contains 6 disulfide bonds. In terms of tissue distribution, expressed by the venom gland.

Its subcellular location is the secreted. With respect to regulation, enzyme activity is markedly inhibited by TLCK and PMSF, and moderately by SBTi. Platelet aggregating activity is strongly inhibited by TLCK. Its function is as follows. Thrombin-like snake venom serine protease that coagulates fibrinogen by inducing a fast degradation of the alpha chain (FGA) from human citrated plasma, and a slow degradation of beta chain (FGB). Potently induces platelet aggregation in both platelet rich plasma and washed platelet preparations in a concentration-dependent fashion. Shows amidolytic activities. This is Thrombin-like enzyme F202 from Crotalus durissus cascavella (Northeastern Brazilian rattlesnake).